A 27-amino-acid polypeptide reads, in one-letter code: thr operon leader peptide (27 aa).

It belongs to the thr operon leader peptide family.

Its function is as follows. This protein is involved in control of the biosynthesis of threonine. This Escherichia coli O157:H7 protein is thr operon leader peptide.